The chain runs to 260 residues: Thiazole synthase (260 aa).

Lys96 acts as the Schiff-base intermediate with DXP in catalysis. Residues Gly157, 184–185, and 206–207 contribute to the 1-deoxy-D-xylulose 5-phosphate site; these read AG and NT.

The protein belongs to the ThiG family. In terms of assembly, homotetramer. Forms heterodimers with either ThiH or ThiS.

The protein localises to the cytoplasm. It catalyses the reaction [ThiS sulfur-carrier protein]-C-terminal-Gly-aminoethanethioate + 2-iminoacetate + 1-deoxy-D-xylulose 5-phosphate = [ThiS sulfur-carrier protein]-C-terminal Gly-Gly + 2-[(2R,5Z)-2-carboxy-4-methylthiazol-5(2H)-ylidene]ethyl phosphate + 2 H2O + H(+). The protein operates within cofactor biosynthesis; thiamine diphosphate biosynthesis. In terms of biological role, catalyzes the rearrangement of 1-deoxy-D-xylulose 5-phosphate (DXP) to produce the thiazole phosphate moiety of thiamine. Sulfur is provided by the thiocarboxylate moiety of the carrier protein ThiS. In vitro, sulfur can be provided by H(2)S. The polypeptide is Thiazole synthase (Rhodopseudomonas palustris (strain BisB5)).